The sequence spans 151 residues: Large ribosomal subunit protein uL22c (151 aa).

Belongs to the universal ribosomal protein uL22 family. Part of the 50S ribosomal subunit.

The protein localises to the plastid. Its subcellular location is the chloroplast. Its function is as follows. This protein binds specifically to 23S rRNA. Functionally, the globular domain of the protein is located near the polypeptide exit tunnel on the outside of the subunit, while an extended beta-hairpin is found that lines the wall of the exit tunnel in the center of the 70S ribosome. The polypeptide is Large ribosomal subunit protein uL22c (rpl22) (Gossypium barbadense (Sea Island cotton)).